The primary structure comprises 356 residues: Uroporphyrinogen decarboxylase (356 aa).

Residues 27–31, Asp-77, Tyr-154, Thr-209, and His-327 contribute to the substrate site; that span reads RQAGR.

The protein belongs to the uroporphyrinogen decarboxylase family. As to quaternary structure, homodimer.

The protein localises to the cytoplasm. It catalyses the reaction uroporphyrinogen III + 4 H(+) = coproporphyrinogen III + 4 CO2. It participates in porphyrin-containing compound metabolism; protoporphyrin-IX biosynthesis; coproporphyrinogen-III from 5-aminolevulinate: step 4/4. Its function is as follows. Catalyzes the decarboxylation of four acetate groups of uroporphyrinogen-III to yield coproporphyrinogen-III. This is Uroporphyrinogen decarboxylase from Hamiltonella defensa subsp. Acyrthosiphon pisum (strain 5AT).